We begin with the raw amino-acid sequence, 211 residues long: MAIQEIRHPLIRHKLGLLRRADISTKNFRELAQEVTMLLTYEATKDLPVVDCEIEGWAGNVTTQRIAGKKITIVPILRAGIGMLDGVLNLIPSAKVSVLGLERDEATLEVRTYYKKLVPDVANRIAMIIDPMLATGNSLVAAIDVLKASGCKDIRVMVLVAAPEGIAKVEAAHPDIQLYTASIDNGLNEHGYIVPGLGDAGDKIFGSVQKD.

5-phospho-alpha-D-ribose 1-diphosphate is bound by residues arginine 78, arginine 103, and 130 to 138; that span reads DPMLATGNS. Residues isoleucine 193 and 198 to 200 each bind uracil; that span reads GDA. Aspartate 199 lines the 5-phospho-alpha-D-ribose 1-diphosphate pocket.

This sequence belongs to the UPRTase family. It depends on Mg(2+) as a cofactor.

The enzyme catalyses UMP + diphosphate = 5-phospho-alpha-D-ribose 1-diphosphate + uracil. It participates in pyrimidine metabolism; UMP biosynthesis via salvage pathway; UMP from uracil: step 1/1. With respect to regulation, allosterically activated by GTP. Functionally, catalyzes the conversion of uracil and 5-phospho-alpha-D-ribose 1-diphosphate (PRPP) to UMP and diphosphate. This chain is Uracil phosphoribosyltransferase, found in Acinetobacter baumannii (strain AB307-0294).